The primary structure comprises 288 residues: Serpentine receptor class gamma-1 (288 aa).

Helical transmembrane passes span 25–45 (LFLQ…VIYI), 59–79 (FYTI…FSIF), 118–138 (FQIL…LWPL), 148–168 (LKSI…TIAI), 197–217 (FSIL…TMLI), 238–258 (VYLS…FLVL), and 268–288 (ILHG…TYVM).

The protein belongs to the nematode receptor-like protein srg family.

It is found in the membrane. The polypeptide is Serpentine receptor class gamma-1 (srg-1) (Caenorhabditis elegans).